Consider the following 311-residue polypeptide: HPr kinase/phosphorylase (311 aa).

Active-site residues include His-138 and Lys-159. 153 to 160 (GDSGIGKS) lines the ATP pocket. Ser-160 is a Mg(2+) binding site. Asp-177 (proton acceptor; for phosphorylation activity. Proton donor; for dephosphorylation activity) is an active-site residue. The tract at residues 201-210 (LEIRGVGIID) is important for the catalytic mechanism of both phosphorylation and dephosphorylation. Residue Glu-202 coordinates Mg(2+). Arg-243 is an active-site residue. Positions 264 to 269 (PVKTGR) are important for the catalytic mechanism of dephosphorylation.

Belongs to the HPrK/P family. As to quaternary structure, homohexamer. The cofactor is Mg(2+).

The catalysed reaction is [HPr protein]-L-serine + ATP = [HPr protein]-O-phospho-L-serine + ADP + H(+). The enzyme catalyses [HPr protein]-O-phospho-L-serine + phosphate + H(+) = [HPr protein]-L-serine + diphosphate. Catalyzes the ATP- as well as the pyrophosphate-dependent phosphorylation of a specific serine residue in HPr, a phosphocarrier protein of the phosphoenolpyruvate-dependent sugar phosphotransferase system (PTS). HprK/P also catalyzes the pyrophosphate-producing, inorganic phosphate-dependent dephosphorylation (phosphorolysis) of seryl-phosphorylated HPr (P-Ser-HPr). The two antagonistic activities of HprK/P are regulated by several intracellular metabolites, which change their concentration in response to the absence or presence of rapidly metabolisable carbon sources (glucose, fructose, etc.) in the growth medium. Therefore, by controlling the phosphorylation state of HPr, HPrK/P is a sensor enzyme that plays a major role in the regulation of carbon metabolism and sugar transport: it mediates carbon catabolite repression (CCR), and regulates PTS-catalyzed carbohydrate uptake and inducer exclusion. The protein is HPr kinase/phosphorylase of Streptococcus agalactiae serotype Ia (strain ATCC 27591 / A909 / CDC SS700).